We begin with the raw amino-acid sequence, 226 residues long: 2-C-methyl-D-erythritol 4-phosphate cytidylyltransferase (226 aa).

This sequence belongs to the IspD/TarI cytidylyltransferase family. IspD subfamily.

It catalyses the reaction 2-C-methyl-D-erythritol 4-phosphate + CTP + H(+) = 4-CDP-2-C-methyl-D-erythritol + diphosphate. It functions in the pathway isoprenoid biosynthesis; isopentenyl diphosphate biosynthesis via DXP pathway; isopentenyl diphosphate from 1-deoxy-D-xylulose 5-phosphate: step 2/6. Its function is as follows. Catalyzes the formation of 4-diphosphocytidyl-2-C-methyl-D-erythritol from CTP and 2-C-methyl-D-erythritol 4-phosphate (MEP). The polypeptide is 2-C-methyl-D-erythritol 4-phosphate cytidylyltransferase (Synechococcus sp. (strain CC9902)).